The sequence spans 892 residues: Alanine--tRNA ligase (892 aa).

His577, His581, Cys680, and His684 together coordinate Zn(2+).

This sequence belongs to the class-II aminoacyl-tRNA synthetase family. Zn(2+) serves as cofactor.

Its subcellular location is the cytoplasm. It catalyses the reaction tRNA(Ala) + L-alanine + ATP = L-alanyl-tRNA(Ala) + AMP + diphosphate. Catalyzes the attachment of alanine to tRNA(Ala) in a two-step reaction: alanine is first activated by ATP to form Ala-AMP and then transferred to the acceptor end of tRNA(Ala). Also edits incorrectly charged Ser-tRNA(Ala) and Gly-tRNA(Ala) via its editing domain. This chain is Alanine--tRNA ligase, found in Arthrobacter sp. (strain FB24).